The chain runs to 136 residues: Translation initiation factor 5A (136 aa).

At lysine 37 the chain carries Hypusine.

The protein belongs to the eIF-5A family.

It is found in the cytoplasm. Its function is as follows. Functions by promoting the formation of the first peptide bond. The sequence is that of Translation initiation factor 5A from Thermococcus kodakarensis (strain ATCC BAA-918 / JCM 12380 / KOD1) (Pyrococcus kodakaraensis (strain KOD1)).